Reading from the N-terminus, the 379-residue chain is MDNLANQGVIVLAAGGTGGHLFPAEALAHELRARGWDVHLATDARAQRFVGAFAQDHVHVIRSATIAGRNPVALLKTFWSLWQGNLDSRKLFRRLKPKLVVGFGGYPTLPPLYAASNMGIPTLIHEQNAVMGRANKGLAGRVKAIAGGFLPENSGAYAAKTVITGNPVRPPVLVAAATPYTPAGKDDRFRLLVFGGSQGAQFFSQAIPAAVALLPEHERARLLITQQARKEDEASARQAYEKLGVPADVAPFFNDMPARMADAHFVIARSGASTVSEITVIGRPAMLVPFPHALDHDQAANAAALAAAGGAEVVRQADLSPQRLAEMLQSAMNEPERLEQQAKAAKSVGKPDAARLLADLAEAIVSGKTVQEFKEGNRP.

UDP-N-acetyl-alpha-D-glucosamine is bound by residues 17-19 (TGG), asparagine 128, arginine 169, serine 197, and glutamine 298.

The protein belongs to the glycosyltransferase 28 family. MurG subfamily.

It localises to the cell inner membrane. It catalyses the reaction di-trans,octa-cis-undecaprenyl diphospho-N-acetyl-alpha-D-muramoyl-L-alanyl-D-glutamyl-meso-2,6-diaminopimeloyl-D-alanyl-D-alanine + UDP-N-acetyl-alpha-D-glucosamine = di-trans,octa-cis-undecaprenyl diphospho-[N-acetyl-alpha-D-glucosaminyl-(1-&gt;4)]-N-acetyl-alpha-D-muramoyl-L-alanyl-D-glutamyl-meso-2,6-diaminopimeloyl-D-alanyl-D-alanine + UDP + H(+). Its pathway is cell wall biogenesis; peptidoglycan biosynthesis. Its function is as follows. Cell wall formation. Catalyzes the transfer of a GlcNAc subunit on undecaprenyl-pyrophosphoryl-MurNAc-pentapeptide (lipid intermediate I) to form undecaprenyl-pyrophosphoryl-MurNAc-(pentapeptide)GlcNAc (lipid intermediate II). The chain is UDP-N-acetylglucosamine--N-acetylmuramyl-(pentapeptide) pyrophosphoryl-undecaprenol N-acetylglucosamine transferase from Brucella suis biovar 1 (strain 1330).